The following is a 103-amino-acid chain: Large ribosomal subunit protein bL32m (103 aa).

Residues 1–47 (MALLRGNSLAISQKMLSVFQASALPHISLRIFISPPSIANIWNSILL) constitute a mitochondrion transit peptide. Positions 77, 80, 90, and 93 each coordinate Zn(2+).

This sequence belongs to the bacterial ribosomal protein bL32 family. In terms of assembly, component of the mitochondrial large ribosomal subunit (mt-LSU). Mature yeast 74S mitochondrial ribosomes consist of a small (37S) and a large (54S) subunit. The 37S small subunit contains a 15S ribosomal RNA (15S mt-rRNA) and at least 32 different proteins. The 54S large subunit contains a 21S rRNA (21S mt-rRNA) and at least 45 different proteins. bL32m has a zinc binding site. MRPL32 precursor is processed by the m-AAA protease, which cleaves the N-terminal transit peptide. Cleavage by the m-AAA protease takes place prior to assembly into the large subunit, an essential step for mitochondrial ribosome (mitoribosome) assembly. Proper processing by the m-AAA protease is dependent on the zinc-binding region within the tightly folded C-terminal domain of MRPL32: zinc-dependent folding halts degradation initiated from the N-terminus and triggers the release of mature mrpl32.

The protein resides in the mitochondrion. Component of the mitochondrial ribosome (mitoribosome), a dedicated translation machinery responsible for the synthesis of mitochondrial genome-encoded proteins, including at least some of the essential transmembrane subunits of the mitochondrial respiratory chain. The mitoribosomes are attached to the mitochondrial inner membrane and translation products are cotranslationally integrated into the membrane. The polypeptide is Large ribosomal subunit protein bL32m (mrpl32) (Schizosaccharomyces pombe (strain 972 / ATCC 24843) (Fission yeast)).